The following is a 274-amino-acid chain: Diaminopimelate epimerase (274 aa).

Positions 11 and 65 each coordinate substrate. Catalysis depends on cysteine 74, which acts as the Proton donor. Residues 75 to 76 (GN), asparagine 158, asparagine 191, and 209 to 210 (ER) each bind substrate. Cysteine 218 serves as the catalytic Proton acceptor. 219–220 (GT) contributes to the substrate binding site.

It belongs to the diaminopimelate epimerase family. As to quaternary structure, homodimer.

The protein resides in the cytoplasm. It carries out the reaction (2S,6S)-2,6-diaminopimelate = meso-2,6-diaminopimelate. It functions in the pathway amino-acid biosynthesis; L-lysine biosynthesis via DAP pathway; DL-2,6-diaminopimelate from LL-2,6-diaminopimelate: step 1/1. Its function is as follows. Catalyzes the stereoinversion of LL-2,6-diaminopimelate (L,L-DAP) to meso-diaminopimelate (meso-DAP), a precursor of L-lysine and an essential component of the bacterial peptidoglycan. The chain is Diaminopimelate epimerase from Carboxydothermus hydrogenoformans (strain ATCC BAA-161 / DSM 6008 / Z-2901).